Consider the following 482-residue polypeptide: UDP-N-acetylmuramoyl-L-alanyl-D-glutamate--2,6-diaminopimelate ligase 1 (482 aa).

Residue Ser-30 coordinates UDP-N-acetyl-alpha-D-muramoyl-L-alanyl-D-glutamate. 110-116 (GTNGKTT) contacts ATP. Residues 152-153 (TT), Ser-179, and Arg-187 each bind UDP-N-acetyl-alpha-D-muramoyl-L-alanyl-D-glutamate. N6-carboxylysine is present on Lys-219. Residues Arg-378, 402–405 (DNPR), Gly-452, and Glu-456 each bind meso-2,6-diaminopimelate. Residues 402 to 405 (DNPR) carry the Meso-diaminopimelate recognition motif motif.

The protein belongs to the MurCDEF family. MurE subfamily. Requires Mg(2+) as cofactor. Post-translationally, carboxylation is probably crucial for Mg(2+) binding and, consequently, for the gamma-phosphate positioning of ATP.

It is found in the cytoplasm. It carries out the reaction UDP-N-acetyl-alpha-D-muramoyl-L-alanyl-D-glutamate + meso-2,6-diaminopimelate + ATP = UDP-N-acetyl-alpha-D-muramoyl-L-alanyl-gamma-D-glutamyl-meso-2,6-diaminopimelate + ADP + phosphate + H(+). It participates in cell wall biogenesis; peptidoglycan biosynthesis. Catalyzes the addition of meso-diaminopimelic acid to the nucleotide precursor UDP-N-acetylmuramoyl-L-alanyl-D-glutamate (UMAG) in the biosynthesis of bacterial cell-wall peptidoglycan. In Clostridium acetobutylicum (strain ATCC 824 / DSM 792 / JCM 1419 / IAM 19013 / LMG 5710 / NBRC 13948 / NRRL B-527 / VKM B-1787 / 2291 / W), this protein is UDP-N-acetylmuramoyl-L-alanyl-D-glutamate--2,6-diaminopimelate ligase 1.